Reading from the N-terminus, the 313-residue chain is MEKRLLDYEVGETVELFLLIKSSVKGTASNGKPFLSLVLQDKSGELEAKLWDVKESDEINYGVQQIVHLMGDIQNYRGRKQLKIRQIRQASPLDGVSASEFMETAPINKDEMADEITQYIFEMKNANLQRITRALLKKYQDDFYDYPAAMRHHHEFVSGLSFHVVSMLRLAKSVADLYPTVNRDLLYAGVILHDLGKVIELSGPVSTTYTLEGNLIGHISIVVEEVSKIAEELSIDGEEVVVLKHVLLSHHGKGEWGSPKPPLVREAEILHQIDLMDASLNMMDKVLKHTKPGEFSERVFGLDNRSFYNPTFE.

The OB DNA-binding region spans 22-90; the sequence is SSVKGTASNG…QLKIRQIRQA (69 aa). Residues 163–279 enclose the HD domain; sequence HVVSMLRLAK…LHQIDLMDAS (117 aa).

This sequence belongs to the YhaM family.

Its function is as follows. Shows a 3'-5' exoribonuclease activity. The sequence is that of 3'-5' exoribonuclease YhaM from Listeria innocua serovar 6a (strain ATCC BAA-680 / CLIP 11262).